The sequence spans 125 residues: Fluoride-specific ion channel FluC (125 aa).

Transmembrane regions (helical) follow at residues 4 to 24 (PLLA…LLAV), 36 to 56 (GTLL…AWFA), 68 to 88 (LITT…LEVV), and 100 to 120 (VISV…GFWL). Na(+)-binding residues include glycine 75 and threonine 78.

Belongs to the fluoride channel Fluc/FEX (TC 1.A.43) family.

The protein resides in the cell inner membrane. It carries out the reaction fluoride(in) = fluoride(out). Na(+) is not transported, but it plays an essential structural role and its presence is essential for fluoride channel function. Fluoride-specific ion channel. Important for reducing fluoride concentration in the cell, thus reducing its toxicity. This is Fluoride-specific ion channel FluC from Erwinia tasmaniensis (strain DSM 17950 / CFBP 7177 / CIP 109463 / NCPPB 4357 / Et1/99).